The following is a 380-amino-acid chain: Guanine nucleotide-binding protein alpha-1 subunit (380 aa).

Residues 1-25 form a disordered region; it reads MGSSCSRSHSLSEAETTKNAKSADI. Gly-2 is lipidated: N-myristoyl glycine. The S-palmitoyl cysteine moiety is linked to residue Cys-5. A compositionally biased stretch (basic and acidic residues) spans 10 to 25; it reads SLSEAETTKNAKSADI. A G-alpha domain is found at 38 to 380; it reads HIHKLLLLGA…ESMRRSREGT (343 aa). The interval 41 to 54 is G1 motif; the sequence is KLLLLGAGESGKST. GTP is bound by residues Glu-49, Ser-50, Gly-51, Lys-52, Ser-53, Thr-54, Asp-163, Leu-188, Tyr-189, Thr-194, Gly-222, Asn-288, Lys-289, Asp-291, and Ala-356. Residue Ser-53 participates in Mg(2+) binding. Positions 186 to 194 are G2 motif; sequence DVLYARVRT. Residue Thr-194 coordinates Mg(2+). Residues 215–224 are G3 motif; that stretch reads YRLYDVGGQR. The tract at residues 284-291 is G4 motif; it reads ILFLNKFD. Residues 354–359 form a G5 motif region; it reads TTALDQ.

This sequence belongs to the G-alpha family. G proteins are composed of 3 units; alpha, beta and gamma. The alpha chain contains the guanine nucleotide binding site. Interacts with COLD1. Mg(2+) serves as cofactor.

Its subcellular location is the cell membrane. Guanine nucleotide-binding proteins (G proteins) are involved as modulators or transducers in various transmembrane signaling systems. May function in a signal transduction pathway required for normal growth and development of internodes, leaves, panicles and seeds. Involved in gibberellin signal transduction. Involved in R gene-mediated disease resistance. Functions upstream of the small GTPase RAC1 in the early steps of signaling. Involved in brassinosteroid response. May not be a signaling molecule in BRI1-mediated perception or transduction. The sequence is that of Guanine nucleotide-binding protein alpha-1 subunit (GPA1) from Oryza sativa subsp. indica (Rice).